Here is a 299-residue protein sequence, read N- to C-terminus: Probable alpha-L-glutamate ligase (299 aa).

The ATP-grasp domain occupies 112–294 (LQLLTEQGIA…IALQMIVHIE (183 aa)). ATP is bound by residues Lys148, 185–186 (DF), Asp194, and 218–220 (RAN). Positions 255, 267, and 269 each coordinate Mg(2+). Residues Asp255, Glu267, and Asn269 each coordinate Mn(2+).

The protein belongs to the RimK family. Requires Mg(2+) as cofactor. It depends on Mn(2+) as a cofactor.

In Histophilus somni (strain 2336) (Haemophilus somnus), this protein is Probable alpha-L-glutamate ligase.